Consider the following 321-residue polypeptide: Lipoyl synthase (321 aa).

[4Fe-4S] cluster contacts are provided by cysteine 68, cysteine 73, cysteine 79, cysteine 94, cysteine 98, cysteine 101, and serine 308. The Radical SAM core domain occupies 80-297; the sequence is FNHGTATFMI…KAEALAMGFT (218 aa).

This sequence belongs to the radical SAM superfamily. Lipoyl synthase family. The cofactor is [4Fe-4S] cluster.

The protein localises to the cytoplasm. The enzyme catalyses [[Fe-S] cluster scaffold protein carrying a second [4Fe-4S](2+) cluster] + N(6)-octanoyl-L-lysyl-[protein] + 2 oxidized [2Fe-2S]-[ferredoxin] + 2 S-adenosyl-L-methionine + 4 H(+) = [[Fe-S] cluster scaffold protein] + N(6)-[(R)-dihydrolipoyl]-L-lysyl-[protein] + 4 Fe(3+) + 2 hydrogen sulfide + 2 5'-deoxyadenosine + 2 L-methionine + 2 reduced [2Fe-2S]-[ferredoxin]. Its pathway is protein modification; protein lipoylation via endogenous pathway; protein N(6)-(lipoyl)lysine from octanoyl-[acyl-carrier-protein]: step 2/2. Functionally, catalyzes the radical-mediated insertion of two sulfur atoms into the C-6 and C-8 positions of the octanoyl moiety bound to the lipoyl domains of lipoate-dependent enzymes, thereby converting the octanoylated domains into lipoylated derivatives. The chain is Lipoyl synthase from Salmonella typhi.